We begin with the raw amino-acid sequence, 200 residues long: Dephospho-CoA kinase (200 aa).

A DPCK domain is found at 6–200; the sequence is AIALSGGIAT…KIKAKYLEKK (195 aa). Residue 14 to 19 coordinates ATP; it reads ATGKST.

The protein belongs to the CoaE family.

The protein resides in the cytoplasm. It catalyses the reaction 3'-dephospho-CoA + ATP = ADP + CoA + H(+). Its pathway is cofactor biosynthesis; coenzyme A biosynthesis; CoA from (R)-pantothenate: step 5/5. Functionally, catalyzes the phosphorylation of the 3'-hydroxyl group of dephosphocoenzyme A to form coenzyme A. This chain is Dephospho-CoA kinase, found in Sulfurimonas denitrificans (strain ATCC 33889 / DSM 1251) (Thiomicrospira denitrificans (strain ATCC 33889 / DSM 1251)).